The chain runs to 190 residues: MPNAECRHNAGFWSAAYAEMPISKFTAYAENAVLPKRKMDGISAYADMPKKIFGGICRYAVMPKNSECRTGMIQTQPGTKIVFNAPYDDKHTYHIKVINSSARRIGYGIKTTNMKRLGVDPPCGVLDPKEAVLLAVSCDAFAFGQEDTNNDRITVEWTNTPDGAAKQFRREWFQGDGMVRRKNLPIEYNP.

Residues 72-189 (MIQTQPGTKI…RRKNLPIEYN (118 aa)) form the MSP domain.

Sperm.

The protein localises to the cell projection. It localises to the pseudopodium. It is found in the cytoplasm. Its subcellular location is the cytoskeleton. Its function is as follows. Central component in molecular interactions underlying sperm crawling. Forms an extensive filament system that extends from sperm villipoda, along the leading edge of the pseudopod. The chain is Major sperm protein 32 (msp-32) from Caenorhabditis elegans.